The following is a 690-amino-acid chain: Eukaryotic translation initiation factor 3 subunit B (690 aa).

The segment covering 1 to 11 has biased composition (basic and acidic residues); sequence MAKKKSEDHSG. The tract at residues 1-37 is disordered; the sequence is MAKKKSEDHSGGDANDSDYNEEPNFEDPPNFVDNISD. Acidic residues predominate over residues 15-25; it reads NDSDYNEEPNF. In terms of domain architecture, RRM spans 57-141; the sequence is SVVVVDNIPK…HTFAVNLFTD (85 aa). 6 WD repeats span residues 207–246, 247–289, 293–331, 334–369, 442–484, and 530–575; these read TRERFTDTFVKWSPLGTYVVTFHKPGVAIWGGSSFQKIQK, FPHT…EKRS, DGMSVLSMFRWSHDDKYVARMGDNSIHIYETPSFYLLDL, IKIPGIRGFSWSPTDNVIAYWVEEQNQIPARVTLME, EIRE…KPSL, and PDHF…IKRT. A coiled-coil region spans residues 614–645; that stretch reads QKDRLRLTRASKELLEKRSQLRETFMEYRNKR.

It belongs to the eIF-3 subunit B family. In terms of assembly, component of the eukaryotic translation initiation factor 3 (eIF-3) complex. The eIF-3 complex interacts with pix. Interacts with mxt.

The protein localises to the cytoplasm. RNA-binding component of the eukaryotic translation initiation factor 3 (eIF-3) complex, which is involved in protein synthesis of a specialized repertoire of mRNAs and, together with other initiation factors, stimulates binding of mRNA and methionyl-tRNAi to the 40S ribosome. The eIF-3 complex specifically targets and initiates translation of a subset of mRNAs involved in cell proliferation. The polypeptide is Eukaryotic translation initiation factor 3 subunit B (Drosophila pseudoobscura pseudoobscura (Fruit fly)).